The sequence spans 212 residues: Peroxisomal membrane protein 4 (212 aa).

Asparagine 57 carries N-linked (GlcNAc...) asparagine glycosylation. The next 2 helical transmembrane spans lie at 97–117 (GKTYPAHAFLAAFLGGILVFG) and 153–173 (WDPFPLLTAVVWGLVLWLFEY). Asparagine 206 carries N-linked (GlcNAc...) asparagine glycosylation.

Belongs to the peroxisomal membrane protein PXMP2/4 family. Interacts with PEX19. In terms of tissue distribution, expressed in normal prostate epithelial cells, and androgen-sensitive prostate adenocarcinoma cells. Not expressed in androgen-insensitive prostate adenocarcinoma cells.

It localises to the peroxisome membrane. This is Peroxisomal membrane protein 4 (PXMP4) from Homo sapiens (Human).